Here is a 768-residue protein sequence, read N- to C-terminus: cGMP-dependent protein kinase, isozyme 1 (768 aa).

The regulatory stretch occupies residues Met1–Ser192. Residues Pro114–Thr127 show a composition bias toward low complexity. The disordered stretch occupies residues Pro114–Pro134. 3',5'-cyclic GMP contacts are provided by residues Gly249–Ala252, Arg259–Thr260, Arg366, Gly375–Ala378, Arg385–Thr386, and Tyr421. In terms of domain architecture, Protein kinase spans Leu457–Phe717. ATP-binding positions include Leu463–Val471 and Lys488. Asp582 acts as the Proton acceptor in catalysis. One can recognise an AGC-kinase C-terminal domain in the interval Leu718–Phe768.

Belongs to the protein kinase superfamily. AGC Ser/Thr protein kinase family. cGMP subfamily. In terms of assembly, homodimer. The cofactor is Mg(2+). Post-translationally, autophosphorylated. As to expression, in embryo stage 13, expression is seen in a few large, irregular cells having the appearance of hemocytes or macrophages. In adults, expression is seen in optic lamina and weakly in testis.

The catalysed reaction is L-seryl-[protein] + ATP = O-phospho-L-seryl-[protein] + ADP + H(+). It carries out the reaction L-threonyl-[protein] + ATP = O-phospho-L-threonyl-[protein] + ADP + H(+). Binding of cGMP results in enzyme activation. The chain is cGMP-dependent protein kinase, isozyme 1 (Pkg21D) from Drosophila melanogaster (Fruit fly).